Consider the following 230-residue polypeptide: Probable phosphatase IndB (230 aa).

Catalysis depends on aspartate 8, which acts as the Nucleophile. Aspartate 8, aspartate 10, and aspartate 169 together coordinate Mg(2+). Catalysis depends on aspartate 10, which acts as the Proton donor.

The protein belongs to the HAD-like hydrolase superfamily. Mg(2+) is required as a cofactor.

Part of an operon that could be involved in the biosynthesis of the blue pigment indigoidine, which is implicated in pathogenicity and protection from oxidative stress. The protein is Probable phosphatase IndB of Dickeya dadantii (strain 3937) (Erwinia chrysanthemi (strain 3937)).